The following is a 411-amino-acid chain: Heterogeneous nuclear ribonucleoprotein 1 (411 aa).

One can recognise an RRM 1 domain in the interval 6-82; the sequence is GKLFVGGISW…REVDVKRAMS (77 aa). Disordered stretches follow at residues 81–103, 183–221, and 358–411; these read MSRE…SSGG, KRAL…DGRM, and AAYG…RQGQ. Polar residues predominate over residues 87–101; it reads QVSGRTGNLNTSRSS. One can recognise an RRM 2 domain in the interval 110-187; sequence KKIFVGGLPP…KQVEVKRALP (78 aa). 3 stretches are compositionally biased toward gly residues: residues 192-212, 362-387, and 397-411; these read PGGG…GYGG, VVGG…GYGD, and GYGG…RQGQ. The interval 341-390 is nuclear targeting sequence (M9); sequence GYGYGGYSGSDSGYGNQAAYGVVGGRPSGGGSNNPGSGGYMGGGYGDGSW.

In terms of assembly, component of the spliceosome. Interacts with TRN1.

It is found in the nucleus. It localises to the cytoplasm. Involved with pre-mRNA processing. Forms complexes (ribonucleosomes) with at least 20 other different hnRNP and heterogeneous nuclear RNA in the nucleus. Its function is as follows. Involved in the packaging of pre-mRNA into hnRNP particles, transport of poly(A) mRNA from the nucleus to the cytoplasm and may modulate splice site selection. In Arabidopsis thaliana (Mouse-ear cress), this protein is Heterogeneous nuclear ribonucleoprotein 1 (RNP1).